The primary structure comprises 364 residues: Aminomethyltransferase (364 aa).

It belongs to the GcvT family. As to quaternary structure, the glycine cleavage system is composed of four proteins: P, T, L and H.

The enzyme catalyses N(6)-[(R)-S(8)-aminomethyldihydrolipoyl]-L-lysyl-[protein] + (6S)-5,6,7,8-tetrahydrofolate = N(6)-[(R)-dihydrolipoyl]-L-lysyl-[protein] + (6R)-5,10-methylene-5,6,7,8-tetrahydrofolate + NH4(+). In terms of biological role, the glycine cleavage system catalyzes the degradation of glycine. This Photorhabdus laumondii subsp. laumondii (strain DSM 15139 / CIP 105565 / TT01) (Photorhabdus luminescens subsp. laumondii) protein is Aminomethyltransferase.